The chain runs to 68 residues: Large ribosomal subunit protein bL35 (68 aa).

Belongs to the bacterial ribosomal protein bL35 family.

In Onion yellows phytoplasma (strain OY-M), this protein is Large ribosomal subunit protein bL35.